Consider the following 228-residue polypeptide: Octanoyltransferase (228 aa).

A BPL/LPL catalytic domain is found at 31 to 212 (EETDGILILL…KFEEVFEIKF (182 aa)). Substrate contacts are provided by residues 76–83 (RGGKITFH), 143–145 (AIG), and 156–158 (GIA). The active-site Acyl-thioester intermediate is the Cys-174.

It belongs to the LipB family.

The protein localises to the cytoplasm. The enzyme catalyses octanoyl-[ACP] + L-lysyl-[protein] = N(6)-octanoyl-L-lysyl-[protein] + holo-[ACP] + H(+). It functions in the pathway protein modification; protein lipoylation via endogenous pathway; protein N(6)-(lipoyl)lysine from octanoyl-[acyl-carrier-protein]: step 1/2. In terms of biological role, catalyzes the transfer of endogenously produced octanoic acid from octanoyl-acyl-carrier-protein onto the lipoyl domains of lipoate-dependent enzymes. Lipoyl-ACP can also act as a substrate although octanoyl-ACP is likely to be the physiological substrate. This chain is Octanoyltransferase, found in Caldanaerobacter subterraneus subsp. tengcongensis (strain DSM 15242 / JCM 11007 / NBRC 100824 / MB4) (Thermoanaerobacter tengcongensis).